The sequence spans 215 residues: ATP phosphoribosyltransferase (215 aa).

This sequence belongs to the ATP phosphoribosyltransferase family. Short subfamily. In terms of assembly, heteromultimer composed of HisG and HisZ subunits.

Its subcellular location is the cytoplasm. It catalyses the reaction 1-(5-phospho-beta-D-ribosyl)-ATP + diphosphate = 5-phospho-alpha-D-ribose 1-diphosphate + ATP. Its pathway is amino-acid biosynthesis; L-histidine biosynthesis; L-histidine from 5-phospho-alpha-D-ribose 1-diphosphate: step 1/9. Catalyzes the condensation of ATP and 5-phosphoribose 1-diphosphate to form N'-(5'-phosphoribosyl)-ATP (PR-ATP). Has a crucial role in the pathway because the rate of histidine biosynthesis seems to be controlled primarily by regulation of HisG enzymatic activity. The polypeptide is ATP phosphoribosyltransferase (Prochlorococcus marinus subsp. pastoris (strain CCMP1986 / NIES-2087 / MED4)).